The sequence spans 431 residues: ORC1-type DNA replication protein 14 (431 aa).

ATP contacts are provided by residues 62-66 (TGKSL), Tyr-219, and Arg-231.

It belongs to the CDC6/cdc18 family.

Its function is as follows. Involved in regulation of DNA replication. This is ORC1-type DNA replication protein 14 (cdc6n) from Haloarcula marismortui (strain ATCC 43049 / DSM 3752 / JCM 8966 / VKM B-1809) (Halobacterium marismortui).